Here is a 370-residue protein sequence, read N- to C-terminus: Queuine tRNA-ribosyltransferase (370 aa).

The active-site Proton acceptor is the Asp-89. Substrate contacts are provided by residues 89–93 (DSGGF), Asp-143, Gln-187, and Gly-214. The tract at residues 245–251 (GVGKPEN) is RNA binding. Asp-264 (nucleophile) is an active-site residue. An RNA binding; important for wobble base 34 recognition region spans residues 269 to 273 (TRNAR). Zn(2+) is bound by residues Cys-302, Cys-304, Cys-307, and His-333.

It belongs to the queuine tRNA-ribosyltransferase family. As to quaternary structure, homodimer. Within each dimer, one monomer is responsible for RNA recognition and catalysis, while the other monomer binds to the replacement base PreQ1. Requires Zn(2+) as cofactor.

It carries out the reaction 7-aminomethyl-7-carbaguanine + guanosine(34) in tRNA = 7-aminomethyl-7-carbaguanosine(34) in tRNA + guanine. Its pathway is tRNA modification; tRNA-queuosine biosynthesis. In terms of biological role, catalyzes the base-exchange of a guanine (G) residue with the queuine precursor 7-aminomethyl-7-deazaguanine (PreQ1) at position 34 (anticodon wobble position) in tRNAs with GU(N) anticodons (tRNA-Asp, -Asn, -His and -Tyr). Catalysis occurs through a double-displacement mechanism. The nucleophile active site attacks the C1' of nucleotide 34 to detach the guanine base from the RNA, forming a covalent enzyme-RNA intermediate. The proton acceptor active site deprotonates the incoming PreQ1, allowing a nucleophilic attack on the C1' of the ribose to form the product. After dissociation, two additional enzymatic reactions on the tRNA convert PreQ1 to queuine (Q), resulting in the hypermodified nucleoside queuosine (7-(((4,5-cis-dihydroxy-2-cyclopenten-1-yl)amino)methyl)-7-deazaguanosine). The polypeptide is Queuine tRNA-ribosyltransferase (Hamiltonella defensa subsp. Acyrthosiphon pisum (strain 5AT)).